A 325-amino-acid chain; its full sequence is Tetraacyldisaccharide 4'-kinase (325 aa).

Position 55-62 (55-62 (TAGGNGKT)) interacts with ATP.

It belongs to the LpxK family.

It carries out the reaction a lipid A disaccharide + ATP = a lipid IVA + ADP + H(+). It functions in the pathway glycolipid biosynthesis; lipid IV(A) biosynthesis; lipid IV(A) from (3R)-3-hydroxytetradecanoyl-[acyl-carrier-protein] and UDP-N-acetyl-alpha-D-glucosamine: step 6/6. Its function is as follows. Transfers the gamma-phosphate of ATP to the 4'-position of a tetraacyldisaccharide 1-phosphate intermediate (termed DS-1-P) to form tetraacyldisaccharide 1,4'-bis-phosphate (lipid IVA). The polypeptide is Tetraacyldisaccharide 4'-kinase (Enterobacter sp. (strain 638)).